The primary structure comprises 520 residues: Peptide chain release factor 3 (520 aa).

One can recognise a tr-type G domain in the interval 8-277 (ESRKTFAIIS…FAPMPNARQT (270 aa)). Residues 17-24 (SHPDAGKT), 85-89 (DTPGH), and 139-142 (NKLD) contribute to the GTP site.

Belongs to the TRAFAC class translation factor GTPase superfamily. Classic translation factor GTPase family. PrfC subfamily.

It localises to the cytoplasm. Functionally, increases the formation of ribosomal termination complexes and stimulates activities of RF-1 and RF-2. It binds guanine nucleotides and has strong preference for UGA stop codons. It may interact directly with the ribosome. The stimulation of RF-1 and RF-2 is significantly reduced by GTP and GDP, but not by GMP. The sequence is that of Peptide chain release factor 3 from Staphylococcus aureus (strain JH1).